Here is a 261-residue protein sequence, read N- to C-terminus: MAHQAHSYHMVDPSPWPIFGAAAALLTTSGLIMWFHYSSTTLLTMGLLSMLLVMLQWWRDVVRESTFQGHHTPTVQKGLRYGMILFITSEAFFFLGFFWAFFHSSLAPTPELGGQWPPTGVKPLNPLEVPLLNTAILLASGVTVTWAHHSITEGNRKQAIHALTLTILLGFYFTALQAMEYHEASFSIADSVYGSTFFVATGFHGLHVIIGSSFLTVCLLRLIKFHFTPNHHFGFEAAAWYWHFVDIIWLFLYMSMYWWGS.

Over 1 to 15 (MAHQAHSYHMVDPSP) the chain is Mitochondrial matrix. The chain crosses the membrane as a helical span at residues 16–34 (WPIFGAAAALLTTSGLIMW). The Mitochondrial intermembrane segment spans residues 35 to 40 (FHYSST). Residues 41–66 (TLLTMGLLSMLLVMLQWWRDVVREST) traverse the membrane as a helical segment. Residues 67–72 (FQGHHT) are Mitochondrial matrix-facing. A helical transmembrane segment spans residues 73–105 (PTVQKGLRYGMILFITSEAFFFLGFFWAFFHSS). Over 106-128 (LAPTPELGGQWPPTGVKPLNPLE) the chain is Mitochondrial intermembrane. Residues 129–152 (VPLLNTAILLASGVTVTWAHHSIT) form a helical membrane-spanning segment. Residues 153–155 (EGN) are Mitochondrial matrix-facing. The chain crosses the membrane as a helical span at residues 156-183 (RKQAIHALTLTILLGFYFTALQAMEYHE). Residues 184–190 (ASFSIAD) lie on the Mitochondrial intermembrane side of the membrane. The helical transmembrane segment at 191-223 (SVYGSTFFVATGFHGLHVIIGSSFLTVCLLRLI) threads the bilayer. Topologically, residues 224 to 232 (KFHFTPNHH) are mitochondrial matrix. The helical transmembrane segment at 233 to 256 (FGFEAAAWYWHFVDIIWLFLYMSM) threads the bilayer. At 257–261 (YWWGS) the chain is on the mitochondrial intermembrane side.

It belongs to the cytochrome c oxidase subunit 3 family. As to quaternary structure, component of the cytochrome c oxidase (complex IV, CIV), a multisubunit enzyme composed of 14 subunits. The complex is composed of a catalytic core of 3 subunits MT-CO1, MT-CO2 and MT-CO3, encoded in the mitochondrial DNA, and 11 supernumerary subunits COX4I, COX5A, COX5B, COX6A, COX6B, COX6C, COX7A, COX7B, COX7C, COX8 and NDUFA4, which are encoded in the nuclear genome. The complex exists as a monomer or a dimer and forms supercomplexes (SCs) in the inner mitochondrial membrane with NADH-ubiquinone oxidoreductase (complex I, CI) and ubiquinol-cytochrome c oxidoreductase (cytochrome b-c1 complex, complex III, CIII), resulting in different assemblies (supercomplex SCI(1)III(2)IV(1) and megacomplex MCI(2)III(2)IV(2)).

The protein resides in the mitochondrion inner membrane. The enzyme catalyses 4 Fe(II)-[cytochrome c] + O2 + 8 H(+)(in) = 4 Fe(III)-[cytochrome c] + 2 H2O + 4 H(+)(out). Functionally, component of the cytochrome c oxidase, the last enzyme in the mitochondrial electron transport chain which drives oxidative phosphorylation. The respiratory chain contains 3 multisubunit complexes succinate dehydrogenase (complex II, CII), ubiquinol-cytochrome c oxidoreductase (cytochrome b-c1 complex, complex III, CIII) and cytochrome c oxidase (complex IV, CIV), that cooperate to transfer electrons derived from NADH and succinate to molecular oxygen, creating an electrochemical gradient over the inner membrane that drives transmembrane transport and the ATP synthase. Cytochrome c oxidase is the component of the respiratory chain that catalyzes the reduction of oxygen to water. Electrons originating from reduced cytochrome c in the intermembrane space (IMS) are transferred via the dinuclear copper A center (CU(A)) of subunit 2 and heme A of subunit 1 to the active site in subunit 1, a binuclear center (BNC) formed by heme A3 and copper B (CU(B)). The BNC reduces molecular oxygen to 2 water molecules using 4 electrons from cytochrome c in the IMS and 4 protons from the mitochondrial matrix. This is Cytochrome c oxidase subunit 3 (MT-CO3) from Gallus gallus (Chicken).